We begin with the raw amino-acid sequence, 87 residues long: MPYTVRFTTTARRDLHKLPPRILAAVVEFAFGDLSREPLRVGKPLRRELAGTFSARRGTYRLLYRIDDEHTTVVILRVDHRADIYRR.

This sequence belongs to the RelE toxin family. In terms of assembly, interacts with cognate antitoxin RelF, which neutralizes the toxin. Also interacts with non-cognate antitoxin RelB in vitro, in M.smegmatis this neutralizes the toxicity of this toxin.

In terms of biological role, toxic component of a type II toxin-antitoxin (TA) system. Has RNase activity and preferentially cleaves at the 3'-end of purine ribonucleotides. Overexpression in M.tuberculosis or M.smegmatis inhibits colony formation in a bacteriostatic rather than bacteriocidal fashion. Its toxic effect is neutralized by coexpression with cognate antitoxin RelB2 (shown only for M.smegmatis). Overexpression also increases the number of gentamicin-tolerant and levofloxacin-tolerant persister cells. Functionally, in combination with cognate antitoxin RelF represses its own promoter. Has been seen to bind DNA in complex with antitoxin RelF but not alone. The protein is Toxin RelG (relG) of Mycobacterium tuberculosis (strain ATCC 25618 / H37Rv).